A 509-amino-acid polypeptide reads, in one-letter code: 2-isopropylmalate synthase (509 aa).

The 263-residue stretch at 5–267 (IQIFDTTLRD…QTALNLEETK (263 aa)) folds into the Pyruvate carboxyltransferase domain. Residues aspartate 14, histidine 202, histidine 204, and asparagine 238 each coordinate Mn(2+). The interval 391 to 509 (KLETLQLQYV…AAENVEKVGN (119 aa)) is regulatory domain.

It belongs to the alpha-IPM synthase/homocitrate synthase family. LeuA type 1 subfamily. Homodimer. Requires Mn(2+) as cofactor.

The protein localises to the cytoplasm. It carries out the reaction 3-methyl-2-oxobutanoate + acetyl-CoA + H2O = (2S)-2-isopropylmalate + CoA + H(+). Its pathway is amino-acid biosynthesis; L-leucine biosynthesis; L-leucine from 3-methyl-2-oxobutanoate: step 1/4. Catalyzes the condensation of the acetyl group of acetyl-CoA with 3-methyl-2-oxobutanoate (2-ketoisovalerate) to form 3-carboxy-3-hydroxy-4-methylpentanoate (2-isopropylmalate). The chain is 2-isopropylmalate synthase from Staphylococcus aureus (strain USA300).